Consider the following 912-residue polypeptide: Vomeronasal type-2 receptor 1 (912 aa).

The first 21 residues, 1 to 21, serve as a signal peptide directing secretion; sequence MASRQISLALGFLAFLWAVLG. The Extracellular segment spans residues 22 to 623; sequence AQNKTEEVQC…LAYGEALGFT (602 aa). N-linked (GlcNAc...) asparagine glycosylation is found at N24, N38, N299, and N386. A helical transmembrane segment spans residues 624–644; that stretch reads LVILSIFGALVVLAVTVVYVI. The Cytoplasmic portion of the chain corresponds to 645-657; sequence HRHTPLVKANDRE. A helical membrane pass occupies residues 658–678; it reads LSFLIQMSLVITVLSSLLFIG. Topologically, residues 679 to 691 are extracellular; sequence KPCNWSCMARQIT. Residues 692-712 form a helical membrane-spanning segment; it reads LALGFCLCLSSILGKTISLFF. Residues 713 to 732 are Cytoplasmic-facing; it reads AYRISVSKTRLISMHPIFRK. A helical membrane pass occupies residues 733 to 753; the sequence is LIVLVCVVGEIGVCAAYLVLE. At 754–778 the chain is on the extracellular side; sequence PPRMFKNIEIQNVKIIFECNEGSVE. A helical transmembrane segment spans residues 779 to 799; sequence FLCSIFGFDVLRALLCFLTTF. The Cytoplasmic segment spans residues 800–812; that stretch reads VARQLPDNYYEGK. The chain crosses the membrane as a helical span at residues 813–833; that stretch reads CITFGMLVFFIVWISFVPAYL. Over 834 to 840 the chain is Extracellular; the sequence is STKGKFK. A helical transmembrane segment spans residues 841–861; sequence VAVEIFAILASSYGLLGCLFL. Residues 862–912 are Cytoplasmic-facing; sequence PKCFIILLRPKRNTDETVGGRVPTVDRSIQLTSASVSSELNSTTVSTVLDE.

It belongs to the G-protein coupled receptor 3 family. Expressed at the sensory surface of the vomeronasal organ.

It localises to the cell membrane. Functionally, putative pheromone receptor. This is Vomeronasal type-2 receptor 1 (Vmn2r1) from Mus musculus (Mouse).